We begin with the raw amino-acid sequence, 363 residues long: DNA replication and repair protein RecF (363 aa).

Residue 30–37 (GPNGSGKT) participates in ATP binding.

The protein belongs to the RecF family.

Its subcellular location is the cytoplasm. The RecF protein is involved in DNA metabolism; it is required for DNA replication and normal SOS inducibility. RecF binds preferentially to single-stranded, linear DNA. It also seems to bind ATP. This is DNA replication and repair protein RecF from Chlorobium limicola (strain DSM 245 / NBRC 103803 / 6330).